Consider the following 278-residue polypeptide: Shikimate dehydrogenase (NADP(+)) (278 aa).

Residues 15-17 (SMS) and T62 each bind shikimate. K66 functions as the Proton acceptor in the catalytic mechanism. Residue E78 coordinates NADP(+). The shikimate site is built by N87 and D102. NADP(+)-binding positions include 127-131 (GAGGA), 151-156 (NRTPEK), and I217. Y219 lines the shikimate pocket. G240 is an NADP(+) binding site.

The protein belongs to the shikimate dehydrogenase family. In terms of assembly, homodimer.

It catalyses the reaction shikimate + NADP(+) = 3-dehydroshikimate + NADPH + H(+). It functions in the pathway metabolic intermediate biosynthesis; chorismate biosynthesis; chorismate from D-erythrose 4-phosphate and phosphoenolpyruvate: step 4/7. Functionally, involved in the biosynthesis of the chorismate, which leads to the biosynthesis of aromatic amino acids. Catalyzes the reversible NADPH linked reduction of 3-dehydroshikimate (DHSA) to yield shikimate (SA). The polypeptide is Shikimate dehydrogenase (NADP(+)) (Bacillus licheniformis (strain ATCC 14580 / DSM 13 / JCM 2505 / CCUG 7422 / NBRC 12200 / NCIMB 9375 / NCTC 10341 / NRRL NRS-1264 / Gibson 46)).